The following is a 78-amino-acid chain: NAD(P)H-quinone oxidoreductase subunit O (78 aa).

The protein belongs to the complex I NdhO subunit family. NDH-1 can be composed of about 15 different subunits; different subcomplexes with different compositions have been identified which probably have different functions.

It is found in the cellular thylakoid membrane. It catalyses the reaction a plastoquinone + NADH + (n+1) H(+)(in) = a plastoquinol + NAD(+) + n H(+)(out). The enzyme catalyses a plastoquinone + NADPH + (n+1) H(+)(in) = a plastoquinol + NADP(+) + n H(+)(out). NDH-1 shuttles electrons from an unknown electron donor, via FMN and iron-sulfur (Fe-S) centers, to quinones in the respiratory and/or the photosynthetic chain. The immediate electron acceptor for the enzyme in this species is believed to be plastoquinone. Couples the redox reaction to proton translocation, and thus conserves the redox energy in a proton gradient. Cyanobacterial NDH-1 also plays a role in inorganic carbon-concentration. The sequence is that of NAD(P)H-quinone oxidoreductase subunit O from Prochlorococcus marinus (strain MIT 9215).